Here is a 540-residue protein sequence, read N- to C-terminus: Probable quinate permease (540 aa).

Residues Met1–Tyr22 are Cytoplasmic-facing. The chain crosses the membrane as a helical span at residues Leu23–Gly43. Residues Thr44–Ser74 are Extracellular-facing. Residues Cys75–Gly95 form a helical membrane-spanning segment. Topologically, residues Arg96–Lys97 are cytoplasmic. The helical transmembrane segment at Trp98–Asn118 threads the bilayer. The Extracellular portion of the chain corresponds to Gly119 to Arg130. The chain crosses the membrane as a helical span at residues Val131–Leu151. Residues Ala152–Arg157 lie on the Cytoplasmic side of the membrane. A helical membrane pass occupies residues Gly158–Ile178. Over Asn179–Trp193 the chain is Extracellular. Residues Ile194–Leu214 form a helical membrane-spanning segment. Residues Arg215 to Arg285 lie on the Cytoplasmic side of the membrane. The chain crosses the membrane as a helical span at residues Leu286–Tyr306. The Extracellular portion of the chain corresponds to Tyr307–Phe325. A helical transmembrane segment spans residues Ser326 to Ile346. Residues Asp347 to Arg352 lie on the Cytoplasmic side of the membrane. The chain crosses the membrane as a helical span at residues Leu353–Ile373. Residues Lys374–Thr387 lie on the Extracellular side of the membrane. Residues Gly388 to Trp408 form a helical membrane-spanning segment. Topologically, residues Asn409–Tyr456 are cytoplasmic. Residues Gly457–Ile477 traverse the membrane as a helical segment. Over Pro478–Ala540 the chain is Extracellular. The segment at Ile519–Ala540 is disordered. The segment covering Gly528 to Ala540 has biased composition (basic and acidic residues).

This sequence belongs to the major facilitator superfamily. Sugar transporter (TC 2.A.1.1) family. In terms of assembly, interacts with creB. In terms of processing, ubiquitinated. Deubiquitinated by creB, probably to control its activity or amount.

Its subcellular location is the cell membrane. Functionally, integral membrane transporter that imports quinic acid to be catabolized as a carbon source. This is Probable quinate permease (qutD) from Aspergillus clavatus (strain ATCC 1007 / CBS 513.65 / DSM 816 / NCTC 3887 / NRRL 1 / QM 1276 / 107).